The following is a 417-amino-acid chain: Tyrosine--tRNA ligase (417 aa).

Y36 contributes to the L-tyrosine binding site. The short motif at 41 to 50 (PTADSLHIGH) is the 'HIGH' region element. L-tyrosine contacts are provided by Y170 and Q174. The short motif at 231–235 (KFGKS) is the 'KMSKS' region element. K234 contacts ATP. Residues 351 to 417 (TNLVELLIEA…GKKKYFMIIH (67 aa)) form the S4 RNA-binding domain.

It belongs to the class-I aminoacyl-tRNA synthetase family. TyrS type 1 subfamily. As to quaternary structure, homodimer.

It localises to the cytoplasm. The catalysed reaction is tRNA(Tyr) + L-tyrosine + ATP = L-tyrosyl-tRNA(Tyr) + AMP + diphosphate + H(+). Catalyzes the attachment of tyrosine to tRNA(Tyr) in a two-step reaction: tyrosine is first activated by ATP to form Tyr-AMP and then transferred to the acceptor end of tRNA(Tyr). The protein is Tyrosine--tRNA ligase of Macrococcus caseolyticus (strain JCSC5402) (Macrococcoides caseolyticum).